The chain runs to 410 residues: Elongation factor Tu, chloroplastic (410 aa).

Positions 10 to 214 (KPHVNIGTIG…QVDAYIPTPE (205 aa)) constitute a tr-type G domain. Residues 19–26 (GHVDHGKT) form a G1 region. 19–26 (GHVDHGKT) is a GTP binding site. Thr26 contributes to the Mg(2+) binding site. Residues 60-64 (GITIN) form a G2 region. The G3 stretch occupies residues 81-84 (DCPG). Residues 81–85 (DCPGH) and 136–139 (NKED) each bind GTP. The segment at 136–139 (NKED) is G4. Residues 174 to 176 (SAL) are G5.

Belongs to the TRAFAC class translation factor GTPase superfamily. Classic translation factor GTPase family. EF-Tu/EF-1A subfamily.

It is found in the plastid. The protein localises to the chloroplast. It catalyses the reaction GTP + H2O = GDP + phosphate + H(+). Its function is as follows. GTP hydrolase that promotes the GTP-dependent binding of aminoacyl-tRNA to the A-site of ribosomes during protein biosynthesis. The sequence is that of Elongation factor Tu, chloroplastic (tufA) from Chlorokybus atmophyticus (Soil alga).